The following is a 307-amino-acid chain: Cytidine deaminase 7 (307 aa).

2 CMP/dCMP-type deaminase domains span residues Thr22–Asp155 and Ser185–Glu307. Asn63–Glu65 serves as a coordination point for substrate. His76 contacts Zn(2+). Glu78 (proton donor) is an active-site residue. The Zn(2+) site is built by Cys111 and Cys114.

The protein belongs to the cytidine and deoxycytidylate deaminase family. In terms of assembly, homodimer. Requires Zn(2+) as cofactor.

It carries out the reaction cytidine + H2O + H(+) = uridine + NH4(+). It catalyses the reaction 2'-deoxycytidine + H2O + H(+) = 2'-deoxyuridine + NH4(+). In terms of biological role, this enzyme scavenges exogenous and endogenous cytidine and 2'-deoxycytidine for UMP synthesis. This Arabidopsis thaliana (Mouse-ear cress) protein is Cytidine deaminase 7 (CDA7).